A 212-amino-acid polypeptide reads, in one-letter code: Cyclin-dependent kinase 2-interacting protein (212 aa).

N-acetylmethionine is present on methionine 1. A phosphoserine mark is found at serine 69 and serine 73. The stretch at 73–107 (SKENEEKVCLEYNEELEKLCEELQATLDGLTKIQV) forms a coiled coil. Serine 202 lines the Na(+) pocket.

The protein belongs to the CINP family. In terms of assembly, homodimer. Part of the 55LCC heterohexameric ATPase complex composed at least of AIRIM, AFG2A, AFG2B and CINP. Interacts with AIRIM. Interacts with CDK2 and CDC7. Interacts with the components of the replication complex, MCM2, MCM3, MCM4, MCM5, MCM6, MCM7 and with ORC2-containing complexes. Interacts with ATRIP. Interacts with CEP152. Associates with pre-60S ribosomal particles. Phosphorylated by CDC7 but not by CDK2.

The protein localises to the nucleus. In terms of biological role, component of the DNA replication complex, which interacts with two kinases, CDK2 and CDC7, thereby providing a functional and physical link between CDK2 and CDC7 during firing of the origins of replication. Regulates ATR-mediated checkpoint signaling in response to DNA damage. Part of the 55LCC heterohexameric ATPase complex which is chromatin-associated and promotes replisome proteostasis to maintain replication fork progression and genome stability. Required for replication fork progression, sister chromatid cohesion, and chromosome stability. The ATPase activity is specifically enhanced by replication fork DNA and is coupled to cysteine protease-dependent cleavage of replisome substrates in response to replication fork damage. Uses ATPase activity to process replisome substrates in S-phase, facilitating their proteolytic turnover from chromatin to ensure DNA replication and mitotic fidelity. As part of 55LCC complex, also involved in the cytoplasmic maturation steps of pre-60S ribosomal particles by promoting the release of shuttling protein RSL24D1/RLP24 from the pre-ribosomal particles. The sequence is that of Cyclin-dependent kinase 2-interacting protein from Homo sapiens (Human).